The primary structure comprises 338 residues: Citramalyl-CoA lyase, mitochondrial (338 aa).

The transit peptide at 1–20 (MALCVLRNTVRGAAALPRLK) directs the protein to the mitochondrion. Substrate is bound by residues Y48, K55, and K59. N6-acetyllysine occurs at positions 55, 59, and 64. N6-acetyllysine; alternate is present on residues K80 and K90. Residues K80 and K90 each carry the N6-succinyllysine; alternate modification. Residue R105 participates in substrate binding. E169 and D204 together coordinate Mg(2+). 270-271 (IH) serves as a coordination point for substrate. K307 bears the N6-succinyllysine mark. D318 is a catalytic residue.

Belongs to the HpcH/HpaI aldolase family. Citrate lyase beta subunit-like subfamily. Homotrimer. Mg(2+) serves as cofactor. As to expression, detected in brown fat, brain, liver, kidney, heart, skeletal muscle and ovary (at protein level).

It is found in the mitochondrion. It catalyses the reaction glyoxylate + acetyl-CoA + H2O = (S)-malate + CoA + H(+). It carries out the reaction propanoyl-CoA + glyoxylate + H2O = 3-methylmalate + CoA + H(+). The enzyme catalyses (3S)-citramalyl-CoA = pyruvate + acetyl-CoA. The catalysed reaction is (S)-malyl-CoA + H2O = (S)-malate + CoA + H(+). Its function is as follows. Mitochondrial citramalyl-CoA lyase indirectly involved in the vitamin B12 metabolism. Converts citramalyl-CoA into acetyl-CoA and pyruvate in the C5-dicarboxylate catabolism pathway. The C5-dicarboxylate catabolism pathway is required to detoxify itaconate, a vitamin B12-poisoning metabolite. Also acts as a malate synthase in vitro, converting glyoxylate and acetyl-CoA to malate. Also displays malyl-CoA thioesterase activity. Also acts as a beta-methylmalate synthase in vitro, by mediating conversion of glyoxylate and propionyl-CoA to beta-methylmalate. Also has very weak citramalate synthase activity in vitro. This Mus musculus (Mouse) protein is Citramalyl-CoA lyase, mitochondrial.